Here is a 413-residue protein sequence, read N- to C-terminus: Alpha-1-antitrypsin-like protein GS55-LT (413 aa).

Positions 1 to 21 (MPSSISWGLLLLAGLSCLATG) are cleaved as a signal peptide. N-linked (GlcNAc...) asparagine glycosylation is found at Asn65, Asn102, and Asn123. The segment at 368–387 (RHTVKGPMALTLAPEVKFNR) is RCL.

It belongs to the serpin family.

The protein resides in the secreted. In terms of biological role, inhibitor of serine proteases. The sequence is that of Alpha-1-antitrypsin-like protein GS55-LT from Ictidomys tridecemlineatus (Thirteen-lined ground squirrel).